Consider the following 197-residue polypeptide: Endoribonuclease YbeY (197 aa).

Zn(2+)-binding residues include His156, His160, and His166.

This sequence belongs to the endoribonuclease YbeY family. Zn(2+) is required as a cofactor.

It is found in the cytoplasm. Single strand-specific metallo-endoribonuclease involved in late-stage 70S ribosome quality control and in maturation of the 3' terminus of the 16S rRNA. This chain is Endoribonuclease YbeY, found in Cupriavidus metallidurans (strain ATCC 43123 / DSM 2839 / NBRC 102507 / CH34) (Ralstonia metallidurans).